Here is a 106-residue protein sequence, read N- to C-terminus: 3-phenylpropionate/cinnamic acid dioxygenase ferredoxin subunit (106 aa).

One can recognise a Rieske domain in the interval 4–99; sequence IYACPVADVP…VHVEGGDIFI (96 aa). [2Fe-2S] cluster contacts are provided by Cys-42, His-44, Cys-62, and His-65.

This sequence belongs to the bacterial ring-hydroxylating dioxygenase ferredoxin component family. This dioxygenase system consists of four proteins: the two subunits of the hydroxylase component (HcaE and HcaF), a ferredoxin (HcaC) and a ferredoxin reductase (HcaD). The cofactor is [2Fe-2S] cluster.

Its pathway is aromatic compound metabolism; 3-phenylpropanoate degradation. Part of the multicomponent 3-phenylpropionate dioxygenase, that converts 3-phenylpropionic acid (PP) and cinnamic acid (CI) into 3-phenylpropionate-dihydrodiol (PP-dihydrodiol) and cinnamic acid-dihydrodiol (CI-dihydrodiol), respectively. This protein seems to be a 2Fe-2S ferredoxin. The protein is 3-phenylpropionate/cinnamic acid dioxygenase ferredoxin subunit of Shigella flexneri serotype 5b (strain 8401).